Consider the following 1150-residue polypeptide: C5a peptidase (1150 aa).

The N-terminal stretch at 1-31 (MRKKQKLPFDKLAIALMSTSILLNAQSDIKA) is a signal peptide. The disordered stretch occupies residues 33–73 (TVTEDTPAAEQAVETPQPTAVSEEVPSSKETKTPQTPDNAE). Residues 99–581 (KATIRDLNDP…AGAVDAKKAS (483 aa)) form the Peptidase S8 domain. Residues Asp130, His193, and Ser512 each act as charge relay system in the active site. Composition is skewed to basic and acidic residues over residues 1029–1054 (EGHSNKPEQDGSDQAPDKKPEAKPEQ) and 1061–1073 (PDKKPETKPEKDS). Residues 1029–1116 (EGHSNKPEQD…RDQLPTTNDK (88 aa)) form a disordered region. 3 consecutive repeat copies span residues 1034 to 1050 (KPEQDGSDQAPDKKPEA), 1051 to 1067 (KPEQDGSGQTPDKKPET), and 1068 to 1084 (KPEKDSSGQTPGKTPQK). The interval 1034–1084 (KPEQDGSDQAPDKKPEAKPEQDGSGQTPDKKPETKPEKDSSGQTPGKTPQK) is 3 X 17 AA tandem repeats. A compositionally biased stretch (polar residues) spans 1075–1089 (GQTPGKTPQKGQPSR). The LPXTG sorting signal signature appears at 1110–1114 (LPTTN). Thr1113 bears the Pentaglycyl murein peptidoglycan amidated threonine mark. Residues 1114–1150 (NDKDTNRLHLLKLVMTTFFFGLVAHIFKTKRQKETKK) constitute a propeptide, removed by sortase.

The protein belongs to the peptidase S8 family. Cleaved by SpeB protease; leading to its degradation. Degradation by SpeB is probably strictly regulated to preserve integrity of C5a peptidase.

Its subcellular location is the secreted. The protein localises to the cell wall. The catalysed reaction is The primary cleavage site is at 67-His-|-Lys-68 in human C5a with a minor secondary cleavage site at 58-Ala-|-Ser-59.. Its function is as follows. This virulence factor of S.pyogenes specifically cleaves the human serum chemotaxin C5a at '68-Lys-|-Asp-69' bond near its C-terminus, destroying its ability to serve as a chemoattractant. This Streptococcus pyogenes serotype M18 (strain MGAS8232) protein is C5a peptidase (scpA).